We begin with the raw amino-acid sequence, 143 residues long: Transcriptional regulator MraZ (143 aa).

SpoVT-AbrB domains are found at residues 5 to 47 (TYTP…SARE) and 76 to 119 (ASDE…DSES).

This sequence belongs to the MraZ family. In terms of assembly, forms oligomers.

It localises to the cytoplasm. It is found in the nucleoid. The polypeptide is Transcriptional regulator MraZ (Micrococcus luteus (strain ATCC 4698 / DSM 20030 / JCM 1464 / CCM 169 / CCUG 5858 / IAM 1056 / NBRC 3333 / NCIMB 9278 / NCTC 2665 / VKM Ac-2230) (Micrococcus lysodeikticus)).